The sequence spans 335 residues: Syntaxin-18 (335 aa).

Topologically, residues 1–309 (MAVDITLLFR…EDIREAIKNN (309 aa)) are cytoplasmic. 2 stretches are compositionally biased toward basic and acidic residues: residues 168–182 (KLEP…ESTS) and 192–208 (KDSE…EKIL). A disordered region spans residues 168 to 226 (KLEPEPNTKTRESTSSEKVSQSPSKDSEENPATEERPEKILAETQPELGTWGDGKGEDE). The region spanning 243 to 305 (IGEMNSLFDE…KEGNEDIREA (63 aa)) is the t-SNARE coiled-coil homology domain. Residues 310–330 (AGFRVWILFFLVMCSFSLLFL) form a helical; Anchor for type IV membrane protein membrane-spanning segment. Over 331–335 (DWYDS) the chain is Vesicular.

The protein belongs to the syntaxin family. In terms of assembly, component of a SNARE complex consisting of STX18, USE1L, BNIP1/SEC20L, and SEC22B. RINT1/TIP20L and ZW10 are associated with the complex through interaction with BNIP1/SEC20L. Interacts directly with USE1L and BNIP1/SEC20L. Ubiquitous.

The protein resides in the endoplasmic reticulum membrane. It is found in the golgi apparatus membrane. In terms of biological role, syntaxin that may be involved in targeting and fusion of Golgi-derived retrograde transport vesicles with the ER. In Homo sapiens (Human), this protein is Syntaxin-18 (STX18).